The following is a 902-amino-acid chain: Serine/threonine-protein kinase cbk1 (902 aa).

3 disordered regions span residues 1 to 22, 97 to 154, and 207 to 288; these read MSED…TCLK, ETHS…REDA, and QRMM…MVSP. Over residues 97-118 the composition is skewed to basic and acidic residues; that stretch reads ETHSHSSDAEGTSHQDVSDRRN. The span at 125-134 shows a compositional bias: polar residues; it reads RPSSHSQADS. Composition is skewed to basic and acidic residues over residues 142–154 and 210–221; these read QQKE…REDA and MLDRGNPKRERS. The segment covering 222-239 has biased composition (low complexity); the sequence is SGSSTPSSKSSPVDSVST. The span at 240–259 shows a compositional bias: polar residues; sequence APTSVSPGSLAPSGSTNNDP. Over residues 264 to 274 the composition is skewed to basic and acidic residues; it reads KHIDSQADLPE. A Protein kinase domain is found at 378–732; sequence FEPLKILGRG…SPKYKQNDAI (355 aa). Residues 384-392 and lysine 432 contribute to the ATP site; that span reads LGRGSFGVV. Aspartate 527 functions as the Proton acceptor in the catalytic mechanism. Residues 771–831 enclose the AGC-kinase C-terminal domain; the sequence is RGINWEQIHR…KWHPLGGKGG (61 aa). Positions 797–806 are enriched in basic and acidic residues; sequence YFDDGEHPSD. A disordered region spans residues 797–875; sequence YFDDGEHPSD…KKRLKEAKRA (79 aa). The segment covering 807-818 has biased composition (acidic residues); it reads REDDSSDSELDG. The segment covering 833 to 843 has biased composition (basic and acidic residues); the sequence is HKPDKPLKADV.

It belongs to the protein kinase superfamily. STE Ser/Thr protein kinase family. COT1 subfamily.

It catalyses the reaction L-seryl-[protein] + ATP = O-phospho-L-seryl-[protein] + ADP + H(+). It carries out the reaction L-threonyl-[protein] + ATP = O-phospho-L-threonyl-[protein] + ADP + H(+). Functionally, protein kinase that seems to play a role in the regulation of cell morphogenesis and proliferation. The chain is Serine/threonine-protein kinase cbk1 (cbk1) from Emericella nidulans (strain FGSC A4 / ATCC 38163 / CBS 112.46 / NRRL 194 / M139) (Aspergillus nidulans).